Consider the following 969-residue polypeptide: Protein translocase subunit SecA (969 aa).

ATP contacts are provided by residues Gln-99, 117–121 (GEGKT), and Asp-631.

Belongs to the SecA family. Monomer and homodimer. Part of the essential Sec protein translocation apparatus which comprises SecA, SecYEG and auxiliary proteins SecDF. Other proteins may also be involved.

The protein resides in the cell inner membrane. Its subcellular location is the cytoplasm. It catalyses the reaction ATP + H2O + cellular proteinSide 1 = ADP + phosphate + cellular proteinSide 2.. Functionally, part of the Sec protein translocase complex. Interacts with the SecYEG preprotein conducting channel. Has a central role in coupling the hydrolysis of ATP to the transfer of proteins into and across the cell membrane, serving as an ATP-driven molecular motor driving the stepwise translocation of polypeptide chains across the membrane. This Chlamydia felis (strain Fe/C-56) (Chlamydophila felis) protein is Protein translocase subunit SecA.